The following is a 518-amino-acid chain: Protein nucleotidyltransferase YdiU (518 aa).

Residues G99, G101, R102, K122, D134, G135, R192, and R199 each contribute to the ATP site. The active-site Proton acceptor is D270. N271 and D280 together coordinate Mg(2+). Residue D280 coordinates ATP.

Belongs to the SELO family. The cofactor is Mg(2+). It depends on Mn(2+) as a cofactor.

The enzyme catalyses L-seryl-[protein] + ATP = 3-O-(5'-adenylyl)-L-seryl-[protein] + diphosphate. The catalysed reaction is L-threonyl-[protein] + ATP = 3-O-(5'-adenylyl)-L-threonyl-[protein] + diphosphate. It carries out the reaction L-tyrosyl-[protein] + ATP = O-(5'-adenylyl)-L-tyrosyl-[protein] + diphosphate. It catalyses the reaction L-histidyl-[protein] + UTP = N(tele)-(5'-uridylyl)-L-histidyl-[protein] + diphosphate. The enzyme catalyses L-seryl-[protein] + UTP = O-(5'-uridylyl)-L-seryl-[protein] + diphosphate. The catalysed reaction is L-tyrosyl-[protein] + UTP = O-(5'-uridylyl)-L-tyrosyl-[protein] + diphosphate. In terms of biological role, nucleotidyltransferase involved in the post-translational modification of proteins. It can catalyze the addition of adenosine monophosphate (AMP) or uridine monophosphate (UMP) to a protein, resulting in modifications known as AMPylation and UMPylation. This is Protein nucleotidyltransferase YdiU from Methylobacillus flagellatus (strain ATCC 51484 / DSM 6875 / VKM B-1610 / KT).